A 325-amino-acid polypeptide reads, in one-letter code: MTTSLVLAVPSKGRLQENAEAFFARAGLTLAKPRGVRDYRGTIAELDNVEIAYLSASEIASQLARGTVHLGVTGEDLIRESIVDADKRVALITSLGFGNANVVVAVPQSWIDVRTMADLDDVATGFRAQHNRRMRVATKYINLTRAFFASHGVVDYRIVESAGATEGAPAVGTAEMIVDITTTGATLTANGLRVLDDGVILRSQANLVASREADWSNGARETARVILDHIAARARASKYREVRTRFPGCDAALLKEAHDRFGVVSPFGGPTSSGMVTLHCPPDRLYALASFLRLHGADTVSIASLDYVFDRDNPLFEKLEVFLRT.

The protein belongs to the ATP phosphoribosyltransferase family. Long subfamily. Mg(2+) is required as a cofactor.

Its subcellular location is the cytoplasm. It carries out the reaction 1-(5-phospho-beta-D-ribosyl)-ATP + diphosphate = 5-phospho-alpha-D-ribose 1-diphosphate + ATP. The protein operates within amino-acid biosynthesis; L-histidine biosynthesis; L-histidine from 5-phospho-alpha-D-ribose 1-diphosphate: step 1/9. With respect to regulation, feedback inhibited by histidine. Its function is as follows. Catalyzes the condensation of ATP and 5-phosphoribose 1-diphosphate to form N'-(5'-phosphoribosyl)-ATP (PR-ATP). Has a crucial role in the pathway because the rate of histidine biosynthesis seems to be controlled primarily by regulation of HisG enzymatic activity. The polypeptide is ATP phosphoribosyltransferase (Nitrobacter winogradskyi (strain ATCC 25391 / DSM 10237 / CIP 104748 / NCIMB 11846 / Nb-255)).